The following is a 937-amino-acid chain: Protocadherin alpha-7 (937 aa).

Residues methionine 1–glycine 29 form the signal peptide. 6 consecutive Cadherin domains span residues glutamine 30–phenylalanine 133, proline 134–phenylalanine 242, aspartate 243–leucine 350, threonine 351–phenylalanine 455, alanine 456–leucine 565, and valine 581–alanine 678. Residues glutamine 30–asparagine 697 lie on the Extracellular side of the membrane. Cysteine 96 and cysteine 102 are joined by a disulfide. Residues asparagine 254 and asparagine 265 are each glycosylated (N-linked (GlcNAc...) asparagine). N-linked (GlcNAc...) asparagine glycosylation is present at asparagine 548. A helical membrane pass occupies residues valine 698 to tyrosine 718. Topologically, residues threonine 719–glutamine 937 are cytoplasmic. Disordered stretches follow at residues glutamine 756–tyrosine 795 and alanine 817–proline 843. PXXP repeat units lie at residues proline 774–proline 777, proline 786–proline 789, proline 819–proline 822, proline 860–proline 863, and proline 878–proline 881. A 5 X 4 AA repeats of P-X-X-P region spans residues proline 774–proline 881. Positions serine 775–arginine 787 are enriched in polar residues. Positions glutamine 888–glutamine 937 are disordered. Positions aspartate 896–lysine 910 are enriched in basic and acidic residues.

As to quaternary structure, forms homodimers in trans (molecules expressed by two different cells). Forms promiscuous heterodimers in cis (at the plasma membrane of the same cell) with other protocadherins.

Its subcellular location is the cell membrane. Functionally, calcium-dependent cell-adhesion protein involved in cells self-recognition and non-self discrimination. Thereby, it is involved in the establishment and maintenance of specific neuronal connections in the brain. This is Protocadherin alpha-7 from Pan troglodytes (Chimpanzee).